A 307-amino-acid polypeptide reads, in one-letter code: uncharacterized protein (307 aa).

The segment at 254–278 is disordered; that stretch reads HSRHHRRHHRRHHHHHHQNSSHSDE. A compositionally biased stretch (basic residues) spans 255 to 272; sequence SRHHRRHHRRHHHHHHQN.

This sequence to yeast YOR062c.

This is an uncharacterized protein from Saccharomyces cerevisiae (strain ATCC 204508 / S288c) (Baker's yeast).